Here is a 697-residue protein sequence, read N- to C-terminus: SITS-binding protein (697 aa).

The disordered stretch occupies residues 1–20; sequence MARRAKKMASNSGDSSPEPG. The Cytoplasmic portion of the chain corresponds to 2-29; that stretch reads ARRAKKMASNSGDSSPEPGIKEINETWK. The chain crosses the membrane as a helical span at residues 30–50; the sequence is GAIACLGVALLFLMTIGVLYW. N-linked (GlcNAc...) asparagine glycosylation is found at Asn-112, Asn-134, Asn-162, Asn-386, Asn-405, and Asn-470. Helical transmembrane passes span 503–521 and 542–562; these read GLIP…FFIP and WMQI…WVFG. N-linked (GlcNAc...) asparagine glycosylation is present at Asn-568.

It belongs to the glycosyl hydrolase 31 family. As to quaternary structure, homodimer; disulfide-linked. As to expression, electroplax tissue, brain (200-fold less), and heart (500-fold less).

It is found in the membrane. This glycoprotein is probably not a functional part of the chloride channel. The polypeptide is SITS-binding protein (Tetronarce californica (Pacific electric ray)).